Consider the following 339-residue polypeptide: Ketol-acid reductoisomerase (NADP(+)) (339 aa).

In terms of domain architecture, KARI N-terminal Rossmann spans 1-182; the sequence is MRVYYDRDAD…GGGRSGVIET (182 aa). NADP(+) is bound by residues 24–27, R48, S51, T53, and 83–86; these read YGSQ and DELQ. Residue H108 is part of the active site. NADP(+) is bound at residue G134. In terms of domain architecture, KARI C-terminal knotted spans 183–328; sequence TFKEECETDL…GKLRAMMPWI (146 aa). Residues D191, E195, E227, and E231 each contribute to the Mg(2+) site. Residue S252 coordinates substrate.

It belongs to the ketol-acid reductoisomerase family. Requires Mg(2+) as cofactor.

The enzyme catalyses (2R)-2,3-dihydroxy-3-methylbutanoate + NADP(+) = (2S)-2-acetolactate + NADPH + H(+). The catalysed reaction is (2R,3R)-2,3-dihydroxy-3-methylpentanoate + NADP(+) = (S)-2-ethyl-2-hydroxy-3-oxobutanoate + NADPH + H(+). It participates in amino-acid biosynthesis; L-isoleucine biosynthesis; L-isoleucine from 2-oxobutanoate: step 2/4. It functions in the pathway amino-acid biosynthesis; L-valine biosynthesis; L-valine from pyruvate: step 2/4. Its function is as follows. Involved in the biosynthesis of branched-chain amino acids (BCAA). Catalyzes an alkyl-migration followed by a ketol-acid reduction of (S)-2-acetolactate (S2AL) to yield (R)-2,3-dihydroxy-isovalerate. In the isomerase reaction, S2AL is rearranged via a Mg-dependent methyl migration to produce 3-hydroxy-3-methyl-2-ketobutyrate (HMKB). In the reductase reaction, this 2-ketoacid undergoes a metal-dependent reduction by NADPH to yield (R)-2,3-dihydroxy-isovalerate. The sequence is that of Ketol-acid reductoisomerase (NADP(+)) from Brucella melitensis biotype 2 (strain ATCC 23457).